The primary structure comprises 355 residues: MFLVLLRACLLTLSLCSPAEDDGLVQEKLFLSSMGLWSRPKPSHHAAVPSQMWKIFKQASKQTVNDPCVVSEYGVRGNIVRFMQDQGSLISAPAVHSFNCVRKHLFFNMSVLEEVEQLSLAQLEMKFKQDLLLLGPHVFSVDLYRVLKTTLKGVTHESSRKLLQSQTLSPGAHASVLVNLTNLAQSWRKPEKNFGMQLELQVMHLNNMLHDHAYVQIPDIHATLVVVSLNPLQCRSRRKRSASYYLPVTPSNVCKPRRLYIDFKDVGWQDWIIAPQGYLANYCHGECPFPLSESLNGTNHAILQTLVHSFDPKGTPQPCCVPIKLSPISMLYYDNNDNVVLRHYEDMVVDECGCR.

Residues 1–15 form the signal peptide; the sequence is MFLVLLRACLLTLSL. The propeptide occupies 16 to 240; it reads CSPAEDDGLV…PLQCRSRRKR (225 aa). 3 N-linked (GlcNAc...) asparagine glycosylation sites follow: Asn108, Asn179, and Asn296. 3 cysteine pairs are disulfide-bonded: Cys254-Cys320, Cys283-Cys352, and Cys287-Cys354.

This sequence belongs to the TGF-beta family. In terms of assembly, homodimer. In terms of tissue distribution, abundant in ovaries and eggs, and equally distributed among all blastomeres.

The protein resides in the secreted. Its function is as follows. Serves to facilitate the differentiation of either mesoderm or endoderm either as a cofactor in an instructive signal or by providing permissive environment. The chain is Protein DVR-1 (dvr1) from Danio rerio (Zebrafish).